We begin with the raw amino-acid sequence, 212 residues long: Probable GTP-binding protein EngB (212 aa).

One can recognise an EngB-type G domain in the interval 38-210 (ALPQIAFVGK…KTSLAKCIKL (173 aa)). Residues 46–53 (GKSNVGKS), 73–77 (GRTRQ), 91–94 (DLPG), 158–161 (TKSD), and 189–191 (VSS) contribute to the GTP site. Serine 53 and threonine 75 together coordinate Mg(2+).

The protein belongs to the TRAFAC class TrmE-Era-EngA-EngB-Septin-like GTPase superfamily. EngB GTPase family. Mg(2+) is required as a cofactor.

Necessary for normal cell division and for the maintenance of normal septation. This Rickettsia bellii (strain OSU 85-389) protein is Probable GTP-binding protein EngB.